Here is a 690-residue protein sequence, read N- to C-terminus: Glycine--tRNA ligase beta subunit (690 aa).

It belongs to the class-II aminoacyl-tRNA synthetase family. In terms of assembly, tetramer of two alpha and two beta subunits.

It localises to the cytoplasm. It catalyses the reaction tRNA(Gly) + glycine + ATP = glycyl-tRNA(Gly) + AMP + diphosphate. The chain is Glycine--tRNA ligase beta subunit from Desulfitobacterium hafniense (strain Y51).